A 271-amino-acid polypeptide reads, in one-letter code: Thiazole synthase (271 aa).

The active-site Schiff-base intermediate with DXP is the K95. Residues G156, A182–G183, and N204–T205 each bind 1-deoxy-D-xylulose 5-phosphate.

It belongs to the ThiG family. As to quaternary structure, homotetramer. Forms heterodimers with either ThiH or ThiS.

It is found in the cytoplasm. The catalysed reaction is [ThiS sulfur-carrier protein]-C-terminal-Gly-aminoethanethioate + 2-iminoacetate + 1-deoxy-D-xylulose 5-phosphate = [ThiS sulfur-carrier protein]-C-terminal Gly-Gly + 2-[(2R,5Z)-2-carboxy-4-methylthiazol-5(2H)-ylidene]ethyl phosphate + 2 H2O + H(+). The protein operates within cofactor biosynthesis; thiamine diphosphate biosynthesis. In terms of biological role, catalyzes the rearrangement of 1-deoxy-D-xylulose 5-phosphate (DXP) to produce the thiazole phosphate moiety of thiamine. Sulfur is provided by the thiocarboxylate moiety of the carrier protein ThiS. In vitro, sulfur can be provided by H(2)S. The chain is Thiazole synthase from Yersinia pseudotuberculosis serotype O:3 (strain YPIII).